Reading from the N-terminus, the 546-residue chain is Glutathione reductase (546 aa).

An apicoplast-targeting transit peptide spans 2–46 (YKHRYFHFFFFFFFFLVSTKIIRSFTFLNNNTNLSNPVYFKKKAN). FAD contacts are provided by Ser-58 and Gly-59. Glutathione is bound at residue Ser-58. Residue Arg-65 participates in glutathione binding. Residues Glu-78, Thr-85, Cys-86, and Lys-94 each coordinate FAD. Cys-86 and Cys-91 are joined by a disulfide. Tyr-141 provides a ligand contact to glutathione. Ala-157 is an FAD binding site. NADP(+)-binding residues include Ile-233, Glu-236, Arg-253, Arg-259, and Gly-318. Residues Asp-358 and Thr-400 each coordinate FAD. Residue Arg-408 participates in glutathione binding. Position 430 (Val-430) interacts with NADP(+). His-531 serves as a coordination point for FAD. The active-site Proton acceptor is the His-531.

Belongs to the class-I pyridine nucleotide-disulfide oxidoreductase family. In terms of assembly, homodimer. It depends on FAD as a cofactor.

It is found in the cytoplasm. Its subcellular location is the plastid. It localises to the apicoplast. The enzyme catalyses 2 glutathione + NADP(+) = glutathione disulfide + NADPH + H(+). In terms of biological role, catalyzes the reduction of glutathione disulfide (GSSG) to reduced glutathione (GSH). Constitutes the major mechanism to maintain a high GSH:GSSG ratio in the cytosol. The protein is Glutathione reductase of Plasmodium falciparum (isolate 3D7).